A 594-amino-acid polypeptide reads, in one-letter code: Cytoplasmic polyadenylation element-binding protein 2 (594 aa).

Residues 72-90 (KEREKVDEEKEGVERREEN) are compositionally biased toward basic and acidic residues. Disordered stretches follow at residues 72–91 (KERE…EENG) and 367–388 (GGGF…STSE). A compositionally biased stretch (gly residues) spans 367 to 378 (GGGFNSGSGSGN). Residues 458 to 540 (LVAFIGGVPR…KRVEIKPYFF (83 aa)) form the RRM domain.

Its function is as follows. Cytoplasmic polyadenylation element binding protein that binds to and regulates the translation of specific mRNAs. The protein is Cytoplasmic polyadenylation element-binding protein 2 (cpb-2) of Caenorhabditis japonica.